Reading from the N-terminus, the 348-residue chain is Anthranilate phosphoribosyltransferase (348 aa).

5-phospho-alpha-D-ribose 1-diphosphate-binding positions include G89, 92–93 (GD), T97, 99–102 (NIST), 117–125 (KHGNRSASS), and S129. Anthranilate is bound at residue G89. Position 101 (S101) interacts with Mg(2+). N120 contributes to the anthranilate binding site. R175 is an anthranilate binding site. The Mg(2+) site is built by D234 and E235.

This sequence belongs to the anthranilate phosphoribosyltransferase family. Homodimer. The cofactor is Mg(2+).

The catalysed reaction is N-(5-phospho-beta-D-ribosyl)anthranilate + diphosphate = 5-phospho-alpha-D-ribose 1-diphosphate + anthranilate. It functions in the pathway amino-acid biosynthesis; L-tryptophan biosynthesis; L-tryptophan from chorismate: step 2/5. Catalyzes the transfer of the phosphoribosyl group of 5-phosphorylribose-1-pyrophosphate (PRPP) to anthranilate to yield N-(5'-phosphoribosyl)-anthranilate (PRA). This chain is Anthranilate phosphoribosyltransferase, found in Synechocystis sp. (strain ATCC 27184 / PCC 6803 / Kazusa).